Reading from the N-terminus, the 618-residue chain is Probable N-acetylgalactosaminyltransferase 6 (618 aa).

Topologically, residues 1–16 (MIASLIRSRRRSRRCV) are cytoplasmic. The chain crosses the membrane as a helical; Signal-anchor for type II membrane protein span at residues 17–39 (VYSVFLFGFLALWGSFALALVFL). The Lumenal portion of the chain corresponds to 40–618 (SDMYIGEDQI…TEMSWLPEHP (579 aa)). 2 N-linked (GlcNAc...) asparagine glycosylation sites follow: Asn81 and Asn149. Disulfide bonds link Cys147-Cys381 and Cys372-Cys452. The segment at 156–267 (LPTTSVIIVY…KGWLEPLLTR (112 aa)) is catalytic subdomain A. Substrate-binding residues include Asp197 and Arg228. Mn(2+) is bound at residue Asp251. Ser252 serves as a coordination point for substrate. Position 253 (His253) interacts with Mn(2+). Residues 327 to 389 (PIESPTMAGG…PCSHVGHVFR (63 aa)) are catalytic subdomain B. Residue Trp358 participates in substrate binding. His386 lines the Mn(2+) pocket. Residue Arg389 participates in substrate binding. Residues 474–609 (RFGRMTSSSN…SNDRQNWTIT (136 aa)) enclose the Ricin B-type lectin domain. Asn483 is a glycosylation site (N-linked (GlcNAc...) asparagine). 3 cysteine pairs are disulfide-bonded: Cys487–Cys505, Cys530–Cys550, and Cys575–Cys597. Residue Asn605 is glycosylated (N-linked (GlcNAc...) asparagine).

This sequence belongs to the glycosyltransferase 2 family. GalNAc-T subfamily. Mn(2+) serves as cofactor.

The protein localises to the golgi apparatus membrane. The protein operates within protein modification; protein glycosylation. Probable glycopeptide transferase involved in O-linked oligosaccharide biosynthesis. Glycopeptide transferases catalyze the transfer of an N-acetyl-D-galactosamine residue to an already glycosylated peptide. In contrast to other members of the family, it does not act as a peptide transferase that transfers GalNAc onto serine or threonine residue on peptides that have been tested. Some peptide transferase activity is however not excluded, considering that its appropriate peptide substrate may remain unidentified. This Caenorhabditis elegans protein is Probable N-acetylgalactosaminyltransferase 6 (gly-6).